The chain runs to 121 residues: Large ribosomal subunit protein uL18 (121 aa).

The protein belongs to the universal ribosomal protein uL18 family. In terms of assembly, part of the 50S ribosomal subunit; part of the 5S rRNA/L5/L18/L25 subcomplex. Contacts the 5S and 23S rRNAs.

This is one of the proteins that bind and probably mediate the attachment of the 5S RNA into the large ribosomal subunit, where it forms part of the central protuberance. This is Large ribosomal subunit protein uL18 from Roseiflexus castenholzii (strain DSM 13941 / HLO8).